A 535-amino-acid polypeptide reads, in one-letter code: CTP synthase (535 aa).

Residues 1-267 (MTKYIFVTGG…DQIVCDHLKL (267 aa)) form an amidoligase domain region. Ser-13 is a CTP binding site. A UTP-binding site is contributed by Ser-13. An ATP-binding site is contributed by 14–19 (SLGKGI). Residue Tyr-54 participates in L-glutamine binding. Asp-71 contributes to the ATP binding site. Mg(2+) contacts are provided by Asp-71 and Glu-141. CTP is bound by residues 148–150 (DIE), 188–193 (KTKPTQ), and Lys-224. UTP-binding positions include 188-193 (KTKPTQ) and Lys-224. ATP is bound at residue 240–242 (RDA). The region spanning 292–534 (KIALVGKYVE…VRASITNKES (243 aa)) is the Glutamine amidotransferase type-1 domain. L-glutamine is bound at residue Gly-354. Residue Cys-381 is the Nucleophile; for glutamine hydrolysis of the active site. L-glutamine-binding positions include 382 to 385 (LGMQ), Glu-405, and Arg-462. Active-site residues include His-507 and Glu-509.

The protein belongs to the CTP synthase family. Homotetramer.

The enzyme catalyses UTP + L-glutamine + ATP + H2O = CTP + L-glutamate + ADP + phosphate + 2 H(+). It carries out the reaction L-glutamine + H2O = L-glutamate + NH4(+). The catalysed reaction is UTP + NH4(+) + ATP = CTP + ADP + phosphate + 2 H(+). Its pathway is pyrimidine metabolism; CTP biosynthesis via de novo pathway; CTP from UDP: step 2/2. With respect to regulation, allosterically activated by GTP, when glutamine is the substrate; GTP has no effect on the reaction when ammonia is the substrate. The allosteric effector GTP functions by stabilizing the protein conformation that binds the tetrahedral intermediate(s) formed during glutamine hydrolysis. Inhibited by the product CTP, via allosteric rather than competitive inhibition. Its function is as follows. Catalyzes the ATP-dependent amination of UTP to CTP with either L-glutamine or ammonia as the source of nitrogen. Regulates intracellular CTP levels through interactions with the four ribonucleotide triphosphates. This chain is CTP synthase, found in Bacillus cereus (strain ATCC 14579 / DSM 31 / CCUG 7414 / JCM 2152 / NBRC 15305 / NCIMB 9373 / NCTC 2599 / NRRL B-3711).